Consider the following 333-residue polypeptide: Protein-methionine-sulfoxide reductase catalytic subunit MsrP (333 aa).

The segment at residues 1 to 43 (MHKHRKPTEADVTPESLFYQRRRVLKALGISAAALSLPLSAQA) is a signal peptide (tat-type signal). Mo-molybdopterin-binding positions include Asn87, 90–91 (YE), Cys145, Thr180, Asn232, Arg237, and 248–250 (NIK).

This sequence belongs to the MsrP family. Heterodimer of a catalytic subunit (MsrP) and a heme-binding subunit (MsrQ). The cofactor is Mo-molybdopterin. Predicted to be exported by the Tat system. The position of the signal peptide cleavage has not been experimentally proven.

The protein localises to the periplasm. The catalysed reaction is L-methionyl-[protein] + a quinone + H2O = L-methionyl-(S)-S-oxide-[protein] + a quinol. It catalyses the reaction L-methionyl-[protein] + a quinone + H2O = L-methionyl-(R)-S-oxide-[protein] + a quinol. Part of the MsrPQ system that repairs oxidized periplasmic proteins containing methionine sulfoxide residues (Met-O), using respiratory chain electrons. Thus protects these proteins from oxidative-stress damage caused by reactive species of oxygen and chlorine generated by the host defense mechanisms. MsrPQ is essential for the maintenance of envelope integrity under bleach stress, rescuing a wide series of structurally unrelated periplasmic proteins from methionine oxidation. The catalytic subunit MsrP is non-stereospecific, being able to reduce both (R-) and (S-) diastereoisomers of methionine sulfoxide. This is Protein-methionine-sulfoxide reductase catalytic subunit MsrP from Pectobacterium atrosepticum (strain SCRI 1043 / ATCC BAA-672) (Erwinia carotovora subsp. atroseptica).